Reading from the N-terminus, the 356-residue chain is Glutamine synthetase N-1 (356 aa).

The GS beta-grasp domain maps to V19 to G99. One can recognise a GS catalytic domain in the interval K106–P356.

The protein belongs to the glutamine synthetase family. Homooctamer. In terms of tissue distribution, this is a nodule isozyme.

It localises to the cytoplasm. It carries out the reaction L-glutamate + NH4(+) + ATP = L-glutamine + ADP + phosphate + H(+). This is Glutamine synthetase N-1 (Gln-gamma) from Phaseolus vulgaris (Kidney bean).